The primary structure comprises 482 residues: Thymidine phosphorylase (482 aa).

A propeptide spanning residues 1–10 is cleaved from the precursor; the sequence is MAALMTPGTG. The tract at residues 1–36 is disordered; it reads MAALMTPGTGAPPAPGDFSGEGSQGLPDPSPEPKQL. Thr-6 is modified (phosphothreonine). Residues His-116, Arg-202, Ser-217, and Lys-221 each coordinate substrate. 2 R-V-A-A-A-L-X(5,6)-L-G-R repeats span residues 265-279 and 329-342; these read RVAA…PLGR and RVAA…ALGR. R-A-L-X-X-A-L-V-L repeat units follow at residues 393–401 and 453–461; these read RALPLALVL and RALQEALVL.

Belongs to the thymidine/pyrimidine-nucleoside phosphorylase family. As to quaternary structure, homodimer.

It catalyses the reaction thymidine + phosphate = 2-deoxy-alpha-D-ribose 1-phosphate + thymine. It participates in pyrimidine metabolism; dTMP biosynthesis via salvage pathway; dTMP from thymine: step 1/2. May have a role in maintaining the integrity of the blood vessels. Has growth promoting activity on endothelial cells, angiogenic activity in vivo and chemotactic activity on endothelial cells in vitro. In terms of biological role, catalyzes the reversible phosphorolysis of thymidine. The produced molecules are then utilized as carbon and energy sources or in the rescue of pyrimidine bases for nucleotide synthesis. This chain is Thymidine phosphorylase, found in Homo sapiens (Human).